Consider the following 64-residue polypeptide: MGMRMMFTVFLLVVLATTVVSFPSDRASDGRDDEAKDERSDMHESDRKEICCNPACGPKYSCGR.

Residues 1–21 (MGMRMMFTVFLLVVLATTVVS) form the signal peptide. The propeptide occupies 22–49 (FPSDRASDGRDDEAKDERSDMHESDRKE). A disordered region spans residues 23-47 (PSDRASDGRDDEAKDERSDMHESDR). Basic and acidic residues predominate over residues 26–47 (RASDGRDDEAKDERSDMHESDR). Cystine bridges form between Cys-51/Cys-56 and Cys-52/Cys-62. Cys-62 is subject to Cysteine amide.

The protein belongs to the conotoxin A superfamily. In terms of tissue distribution, expressed by the venom duct.

It localises to the secreted. Functionally, alpha-conotoxins act on postsynaptic membranes, they bind to the nicotinic acetylcholine receptors (nAChR) and thus inhibit them. Is active on muscle nAChR (IC(50)=113 nM on adult subtype (alpha-1-beta-1-gamma-delta/CHRNA1-CHRNB1-CHRNG-CHRND) and IC(50)=142 nM on fetal subtype (alpha-1-beta-1-delta-epsilon/CHRNA1-CHRNB1-CHRND-CHRNE)). On mice muscle receptors, its higher affinity site is the alpha/delta nAChR subunit interface. On Torpedo receptors, it does not distinguish between alpha/delta and alpha/gamma acetylcholine-binding sites. In vivo, causes paralysis followed by death when injected into goldfish. In contrast, has no effect on mice, when similar doses are intraperitoneally or intracerebrally injected. In Conus striatus (Striated cone), this protein is Alpha-conotoxin SI.